A 2142-amino-acid polypeptide reads, in one-letter code: U5 small nuclear ribonucleoprotein 200 kDa helicase (2142 aa).

3 disordered regions span residues 52–74 (MGDR…RQKR), 211–234 (EESE…QDEG), and 366–396 (RQLD…DGGA). Residues 369–391 (DTGKSEDQEEGEARGSKRGKGDA) show a composition bias toward basic and acidic residues. The Helicase ATP-binding 1 domain occupies 490–673 (KAALDSDENM…FLRVKPDKGL (184 aa)). 503–510 (APTGAGKT) is an ATP binding site. Positions 615 to 618 (DEIH) match the DEIH box motif. Residues 684–917 (SLEQQYIGVT…GTVQHLQDAV (234 aa)) form the Helicase C-terminal 1 domain. The 306-residue stretch at 981-1286 (VTDLGRIASH…GAETQLPVSF (306 aa)) folds into the SEC63 1 domain. In terms of domain architecture, Helicase ATP-binding 2 spans 1337–1511 (NAVYNSDENV…WLGCNPNATF (175 aa)). 1350–1357 (APTGSGKM) is an ATP binding site. A DELQ box motif is present at residues 1453–1456 (DELQ). A Helicase C-terminal 2 domain is found at 1544–1752 (PVYNAILKYS…TIENKQDAVD (209 aa)). The SEC63 2 domain occupies 1811-2128 (PLNLGMIAAY…GCDQEYKFSI (318 aa)).

It belongs to the helicase family. SKI2 subfamily.

The protein localises to the nucleus. It catalyses the reaction ATP + H2O = ADP + phosphate + H(+). In terms of biological role, catalyzes the ATP-dependent unwinding of U4/U6 RNA duplices, an essential step in the assembly of a catalytically active spliceosome. Plays a role in pre-mRNA splicing. This is U5 small nuclear ribonucleoprotein 200 kDa helicase from Drosophila melanogaster (Fruit fly).